A 182-amino-acid chain; its full sequence is Ribosome-recycling factor (182 aa).

The disordered stretch occupies residues 137 to 158 (KKSEKESEISEDQSRDEQDNVQ).

This sequence belongs to the RRF family.

It localises to the cytoplasm. Functionally, responsible for the release of ribosomes from messenger RNA at the termination of protein biosynthesis. May increase the efficiency of translation by recycling ribosomes from one round of translation to another. In Prochlorococcus marinus (strain MIT 9211), this protein is Ribosome-recycling factor.